The chain runs to 232 residues: Orotidine 5'-phosphate decarboxylase (232 aa).

Substrate-binding positions include aspartate 11, lysine 33, 61–70, threonine 116, arginine 179, glutamine 188, glycine 208, and arginine 209; that span reads DMKLFDIGAT. Catalysis depends on lysine 63, which acts as the Proton donor.

The protein belongs to the OMP decarboxylase family. Type 1 subfamily. Homodimer.

The enzyme catalyses orotidine 5'-phosphate + H(+) = UMP + CO2. It functions in the pathway pyrimidine metabolism; UMP biosynthesis via de novo pathway; UMP from orotate: step 2/2. In terms of biological role, catalyzes the decarboxylation of orotidine 5'-monophosphate (OMP) to uridine 5'-monophosphate (UMP). The protein is Orotidine 5'-phosphate decarboxylase of Cereibacter sphaeroides (strain ATCC 17023 / DSM 158 / JCM 6121 / CCUG 31486 / LMG 2827 / NBRC 12203 / NCIMB 8253 / ATH 2.4.1.) (Rhodobacter sphaeroides).